A 187-amino-acid polypeptide reads, in one-letter code: UPF0340 protein SPT_0687 (187 aa).

It belongs to the UPF0340 family.

This is UPF0340 protein SPT_0687 from Streptococcus pneumoniae (strain Taiwan19F-14).